We begin with the raw amino-acid sequence, 601 residues long: Potassium voltage-gated channel subfamily A member 5 (601 aa).

The segment at Met-1–Glu-200 is tetramerization domain. The Cytoplasmic segment spans residues Met-1–Gly-236. The disordered stretch occupies residues Gly-19 to Leu-93. The segment covering Arg-65–Pro-74 has biased composition (pro residues). Lys-210 is covalently cross-linked (Glycyl lysine isopeptide (Lys-Gly) (interchain with G-Cter in SUMO)). Residues Ser-237 to Leu-258 traverse the membrane as a helical segment. The Extracellular segment spans residues Glu-259 to Pro-312. The tract at residues Pro-275 to Ser-297 is disordered. Asn-288 carries N-linked (GlcNAc...) asparagine glycosylation. The helical transmembrane segment at Phe-313–Ala-334 threads the bilayer. Cys-335 is lipidated: S-palmitoyl cysteine. Topologically, residues Cys-335–Ile-345 are cytoplasmic. The chain crosses the membrane as a helical span at residues Met-346–Ala-366. Residues Glu-367–Ser-383 are Extracellular-facing. Residues Leu-384–His-404 form a helical; Voltage-sensor membrane-spanning segment. At Ser-405 to Met-419 the chain is on the cytoplasmic side. The S4-S5 linker stretch occupies residues Lys-406 to Met-419. Residues Arg-420–Tyr-441 traverse the membrane as a helical segment. Residues Phe-442–Ile-455 lie on the Extracellular side of the membrane. The helical intramembrane region spans Pro-456–Thr-467. The Selectivity filter motif lies at Thr-468–Asp-473. Residues Thr-468 to Arg-475 lie within the membrane without spanning it. Topologically, residues Pro-476–Lys-482 are extracellular. Residues Ile-483 to Tyr-511 traverse the membrane as a helical segment. The Cytoplasmic segment spans residues His-512–Leu-601. Residues Ala-521–Ser-545 form a disordered region. Lys-524 is covalently cross-linked (Glycyl lysine isopeptide (Lys-Gly) (interchain with G-Cter in SUMO)). Residues Thr-599–Leu-601 carry the PDZ-binding motif.

This sequence belongs to the potassium channel family. A (Shaker) (TC 1.A.1.2) subfamily. Kv1.5/KCNA5 sub-subfamily. As to quaternary structure, homotetramer and heterotetramer of potassium channel proteins. Interacts with DLG1, which enhances channel currents. Forms a ternary complex with DLG1 and CAV3. Interacts with KCNAB1. Interacts with UBE2I. Interacts with XIRP2; the interaction is required for normal action potential configuration in the heart. In terms of processing, glycosylated. Post-translationally, sumoylated on Lys-210, and Lys-524, preferentially with SUMO3. Sumoylation regulates the voltage sensitivity of the channel.

Its subcellular location is the cell membrane. The enzyme catalyses K(+)(in) = K(+)(out). Voltage-gated potassium channel that mediates transmembrane potassium transport in excitable membranes. Forms tetrameric potassium-selective channels through which potassium ions pass in accordance with their electrochemical gradient. The channel alternates between opened and closed conformations in response to the voltage difference across the membrane. Can form functional homotetrameric channels and heterotetrameric channels that contain variable proportions of KCNA1, KCNA2, KCNA4, KCNA5, and possibly other family members as well; channel properties depend on the type of alpha subunits that are part of the channel. Channel properties are modulated by cytoplasmic beta subunits that regulate the subcellular location of the alpha subunits and promote rapid inactivation. Homotetrameric channels display rapid activation and slow inactivation. Required for normal electrical conduction including formation of the infranodal ventricular conduction system and normal action potential configuration, as a result of its interaction with XIRP2. May play a role in regulating the secretion of insulin in normal pancreatic islets. The protein is Potassium voltage-gated channel subfamily A member 5 (KCNA5) of Mustela putorius furo (European domestic ferret).